Reading from the N-terminus, the 564-residue chain is 2-succinyl-5-enolpyruvyl-6-hydroxy-3-cyclohexene-1-carboxylate synthase (564 aa).

The protein belongs to the TPP enzyme family. MenD subfamily. In terms of assembly, homodimer. Mg(2+) is required as a cofactor. Mn(2+) serves as cofactor. It depends on thiamine diphosphate as a cofactor.

The enzyme catalyses isochorismate + 2-oxoglutarate + H(+) = 5-enolpyruvoyl-6-hydroxy-2-succinyl-cyclohex-3-ene-1-carboxylate + CO2. Its pathway is quinol/quinone metabolism; 1,4-dihydroxy-2-naphthoate biosynthesis; 1,4-dihydroxy-2-naphthoate from chorismate: step 2/7. It functions in the pathway quinol/quinone metabolism; menaquinone biosynthesis. Its function is as follows. Catalyzes the thiamine diphosphate-dependent decarboxylation of 2-oxoglutarate and the subsequent addition of the resulting succinic semialdehyde-thiamine pyrophosphate anion to isochorismate to yield 2-succinyl-5-enolpyruvyl-6-hydroxy-3-cyclohexene-1-carboxylate (SEPHCHC). This chain is 2-succinyl-5-enolpyruvyl-6-hydroxy-3-cyclohexene-1-carboxylate synthase, found in Vibrio vulnificus (strain CMCP6).